The following is a 172-amino-acid chain: dCTP deaminase (172 aa).

DCTP contacts are provided by residues 97-102 (RSSFAR) and Asp113. Residue Glu123 is the Proton donor/acceptor of the active site. DCTP-binding residues include Tyr155 and Gln162.

The protein belongs to the dCTP deaminase family. In terms of assembly, homotrimer.

It catalyses the reaction dCTP + H2O + H(+) = dUTP + NH4(+). The protein operates within pyrimidine metabolism; dUMP biosynthesis; dUMP from dCTP (dUTP route): step 1/2. Functionally, catalyzes the deamination of dCTP to dUTP. The chain is dCTP deaminase from Metallosphaera sedula (strain ATCC 51363 / DSM 5348 / JCM 9185 / NBRC 15509 / TH2).